A 303-amino-acid polypeptide reads, in one-letter code: Zinc import ATP-binding protein ZnuC (303 aa).

Residues 17 to 232 (VSLENVGVLR…PEYVRLFGSR (216 aa)) form the ABC transporter domain. 49–56 (GPNGSGKS) provides a ligand contact to ATP. Residues 263-303 (DHCHPDDGHHAHEHGHAGHEHDHDHPDHAHPHAHEAGERHA) are disordered.

The protein belongs to the ABC transporter superfamily. Zinc importer (TC 3.A.1.15.5) family. As to quaternary structure, the complex is composed of two ATP-binding proteins (ZnuC), two transmembrane proteins (ZnuB) and a solute-binding protein (ZnuA).

The protein localises to the cell inner membrane. It carries out the reaction Zn(2+)(out) + ATP(in) + H2O(in) = Zn(2+)(in) + ADP(in) + phosphate(in) + H(+)(in). In terms of biological role, part of the ABC transporter complex ZnuABC involved in zinc import. Responsible for energy coupling to the transport system. This is Zinc import ATP-binding protein ZnuC from Rhizobium johnstonii (strain DSM 114642 / LMG 32736 / 3841) (Rhizobium leguminosarum bv. viciae).